The following is a 241-amino-acid chain: tRNA (guanine-N(7)-)-methyltransferase (241 aa).

Residues 1 to 10 are compositionally biased toward polar residues; that stretch reads MTESNETPNT. Positions 1 to 21 are disordered; sequence MTESNETPNTPEAGDESKHRR. E71, E96, D123, and D146 together coordinate S-adenosyl-L-methionine. The active site involves D146. Residues K150, D182, and 219 to 222 each bind substrate; that span reads TKFE.

It belongs to the class I-like SAM-binding methyltransferase superfamily. TrmB family.

The enzyme catalyses guanosine(46) in tRNA + S-adenosyl-L-methionine = N(7)-methylguanosine(46) in tRNA + S-adenosyl-L-homocysteine. The protein operates within tRNA modification; N(7)-methylguanine-tRNA biosynthesis. Functionally, catalyzes the formation of N(7)-methylguanine at position 46 (m7G46) in tRNA. This is tRNA (guanine-N(7)-)-methyltransferase from Pseudomonas fluorescens (strain SBW25).